Consider the following 120-residue polypeptide: Large ribosomal subunit protein uL18 (120 aa).

The protein belongs to the universal ribosomal protein uL18 family. In terms of assembly, part of the 50S ribosomal subunit; part of the 5S rRNA/L5/L18 subcomplex. In B.stearothermophilus only 2 proteins, L5 and L18 have been shown to be part of this subcomplex, unlike the case in E.coli and T.thermophilus where L25 (TL5) is also found. The protein, when overexpressed in E.coli, contains a phosphoserine, which is required for the protein to bind to 5S rRNA. It has been suggested, based solely on amino acid conservation, that this occurs on Ser-57.

In terms of biological role, this is one of the proteins that bind and probably mediate the attachment of the 5S RNA into the large ribosomal subunit, where it forms part of the central protuberance. The protein is Large ribosomal subunit protein uL18 (rplR) of Geobacillus stearothermophilus (Bacillus stearothermophilus).